We begin with the raw amino-acid sequence, 313 residues long: Ribose-phosphate pyrophosphokinase (313 aa).

Residues 37–39 and 96–97 contribute to the ATP site; these read DGE and RQ. Mg(2+) contacts are provided by His-131 and Asp-170. The active site involves Lys-193. Residues Arg-195, Asp-219, and 223–227 each bind D-ribose 5-phosphate; that span reads DTAGT.

Belongs to the ribose-phosphate pyrophosphokinase family. Class I subfamily. Homohexamer. Requires Mg(2+) as cofactor.

The protein resides in the cytoplasm. The enzyme catalyses D-ribose 5-phosphate + ATP = 5-phospho-alpha-D-ribose 1-diphosphate + AMP + H(+). It functions in the pathway metabolic intermediate biosynthesis; 5-phospho-alpha-D-ribose 1-diphosphate biosynthesis; 5-phospho-alpha-D-ribose 1-diphosphate from D-ribose 5-phosphate (route I): step 1/1. In terms of biological role, involved in the biosynthesis of the central metabolite phospho-alpha-D-ribosyl-1-pyrophosphate (PRPP) via the transfer of pyrophosphoryl group from ATP to 1-hydroxyl of ribose-5-phosphate (Rib-5-P). The polypeptide is Ribose-phosphate pyrophosphokinase (Pseudomonas putida (strain ATCC 47054 / DSM 6125 / CFBP 8728 / NCIMB 11950 / KT2440)).